A 177-amino-acid polypeptide reads, in one-letter code: ATP synthase subunit delta (177 aa).

Belongs to the ATPase delta chain family. In terms of assembly, F-type ATPases have 2 components, F(1) - the catalytic core - and F(0) - the membrane proton channel. F(1) has five subunits: alpha(3), beta(3), gamma(1), delta(1), epsilon(1). F(0) has three main subunits: a(1), b(2) and c(10-14). The alpha and beta chains form an alternating ring which encloses part of the gamma chain. F(1) is attached to F(0) by a central stalk formed by the gamma and epsilon chains, while a peripheral stalk is formed by the delta and b chains.

It localises to the cell inner membrane. Functionally, f(1)F(0) ATP synthase produces ATP from ADP in the presence of a proton or sodium gradient. F-type ATPases consist of two structural domains, F(1) containing the extramembraneous catalytic core and F(0) containing the membrane proton channel, linked together by a central stalk and a peripheral stalk. During catalysis, ATP synthesis in the catalytic domain of F(1) is coupled via a rotary mechanism of the central stalk subunits to proton translocation. Its function is as follows. This protein is part of the stalk that links CF(0) to CF(1). It either transmits conformational changes from CF(0) to CF(1) or is implicated in proton conduction. This is ATP synthase subunit delta from Actinobacillus pleuropneumoniae serotype 7 (strain AP76).